The following is a 458-amino-acid chain: Hepatocyte nuclear factor 3-beta (458 aa).

The segment at 14 to 93 is transactivation domain 1; that stretch reads DWSSYYAEPE…AGAMAGMSGS (80 aa). The Nuclear localization signal motif lies at 106–113; the sequence is LSPSLSPL. The residue at position 156 (Thr-156) is a Phosphothreonine; by PKB/AKT1. The fork-head DNA-binding region spans 159–252; that stretch reads KPPYSYISLI…ENGCYLRRQK (94 aa). Phosphoserine is present on residues Ser-212 and Ser-283. Positions 286-365 are disordered; the sequence is QLGEAAGSAS…PGLPPEAHLK (80 aa). Over residues 294–310 the composition is skewed to polar residues; that stretch reads ASETPAGTESPHSSASP. Residue Thr-301 is modified to Phosphothreonine. Phosphoserine occurs at positions 303, 306, 307, and 309. Residues 339-352 are compositionally biased toward low complexity; that stretch reads PGQQQQAAAHLLGP. Positions 361 to 458 are transactivation domain 2; it reads EAHLKPEHHY…VYSRPIMNSS (98 aa). Ser-437 and Ser-458 each carry phosphoserine.

Binds DNA as a monomer. Binds TLE1. Interacts with FOXA1 and FOXA3. Interacts with PRKDC. Interacts with AKT1. Interacts with TET1; this interaction may recruit TET1 to specific genomic loci to mediate their demethylation. Post-translationally, phosphorylation on Thr-156 abolishes binding to target promoters and subsequent transcription activation upon insulin stimulation. As to expression, liver.

The protein resides in the nucleus. It is found in the cytoplasm. In terms of biological role, transcription factor that is involved in embryonic development, establishment of tissue-specific gene expression and regulation of gene expression in differentiated tissues. Is thought to act as a 'pioneer' factor opening the compacted chromatin for other proteins through interactions with nucleosomal core histones and thereby replacing linker histones at target enhancer and/or promoter sites. Binds DNA with the consensus sequence 5'-[AC]A[AT]T[AG]TT[GT][AG][CT]T[CT]-3'. In embryonic development is required for notochord formation. Involved in the development of multiple endoderm-derived organ systems such as the liver, pancreas and lungs; FOXA1 and FOXA2 seem to have at least in part redundant roles. Originally described as a transcription activator for a number of liver genes such as AFP, albumin, tyrosine aminotransferase, PEPCK, etc. Interacts with the cis-acting regulatory regions of these genes. Involved in glucose homeostasis; regulates the expression of genes important for glucose sensing in pancreatic beta-cells and glucose homeostasis. Involved in regulation of fat metabolism. Acts synergistically with ONECUT1 to activate transcription of female-specific CYP2C12; the function is inhibited by growth hormone-activated STAT5B. Acts synergistically with HNF4A to activate transcription of APOA1. In Rattus norvegicus (Rat), this protein is Hepatocyte nuclear factor 3-beta (Foxa2).